Consider the following 96-residue polypeptide: Beta-defensin 132 (96 aa).

Positions 1–22 are cleaved as a signal peptide; that stretch reads MKFLLLVLAALRFLTQVIPASG. 3 disulfide bridges follow: C27–C55, C35–C49, and C39–C56. A disordered region spans residues 74–96; it reads HWQSRRRNTQRKDKKQQTTVTSS. Over residues 76–87 the composition is skewed to basic residues; it reads QSRRRNTQRKDK.

The protein belongs to the beta-defensin family.

It localises to the secreted. Has antibacterial activity. This chain is Beta-defensin 132 (DEFB132), found in Hylobates lar (Lar gibbon).